The following is a 111-amino-acid chain: MATRRIVATEKSILEKDDHIGSSPAAGEKSNITPAVPLDVILKLLAFTLAMVVIPIGSYFVTVNSIFKGNSTYAGALAAIMANVVLVAYVVVAMNEDQTEQEKAKEGKKDR.

Residues methionine 1–aspartate 39 are Cytoplasmic-facing. Residues valine 40–phenylalanine 60 form a helical membrane-spanning segment. Topologically, residues valine 61–tyrosine 73 are lumenal. A helical membrane pass occupies residues alanine 74–methionine 94. Topologically, residues asparagine 95–arginine 111 are cytoplasmic. The Prevents secretion from ER motif lies at lysine 108–arginine 111.

This sequence belongs to the VMA21 family.

It localises to the endoplasmic reticulum membrane. The protein localises to the endoplasmic reticulum-Golgi intermediate compartment membrane. The protein resides in the cytoplasmic vesicle. It is found in the COPII-coated vesicle membrane. Its function is as follows. Required for the assembly of the V0 complex of the vacuolar ATPase (V-ATPase) in the endoplasmic reticulum. The chain is Vacuolar ATPase assembly integral membrane protein VMA21 from Pyricularia oryzae (strain 70-15 / ATCC MYA-4617 / FGSC 8958) (Rice blast fungus).